A 735-amino-acid chain; its full sequence is Disintegrin and metalloproteinase domain-containing protein 2 (735 aa).

An N-terminal signal peptide occupies residues 1–18; it reads MWLILLLLSGLSELGGLS. Positions 19–180 are excised as a propeptide; the sequence is QSQTEGTREK…YKIRSIKPQR (162 aa). Over 19–686 the chain is Extracellular; the sequence is QSQTEGTREK…ASAYRSKSPR (668 aa). 3 N-linked (GlcNAc...) asparagine glycosylation sites follow: N128, N226, and N279. One can recognise a Peptidase M12B domain in the interval 184-381; that stretch reads HYLEIHIVVE…QSSHCLQNQP (198 aa). Intrachain disulfides connect C293-C376, C335-C360, C337-C342, and C449-C469. N359, N463, N489, N569, and N585 each carry an N-linked (GlcNAc...) asparagine glycan. One can recognise a Disintegrin domain in the interval 389–476; sequence MAVCGNGEVE…EVCEDFFVQN (88 aa). The EGF-like domain maps to 615-648; it reads LGYDCNLEKCNHHGVCNNKKNCHCDPTYLPPDCK. Disulfide bonds link C619–C630, C624–C636, and C638–C647. Residues 687-707 form a helical membrane-spanning segment; sequence WPFFLIIPFYVVILVLIGMLV. The Cytoplasmic segment spans residues 708–735; the sequence is KVYSQRMKWRMDDFSSEEQFESESESKD. Phosphoserine is present on S729.

As to quaternary structure, heterodimer with ADAM1/fertilin subunit alpha. Post-translationally, the signal and the metalloprotease domain are cleaved during the epididymal maturation of the spermatozoa. As to expression, expressed in the testis and testicular sperm (at protein level).

Its subcellular location is the membrane. Functionally, sperm surface membrane protein that may be involved in sperm-egg plasma membrane adhesion and fusion during fertilization. Could have a direct role in sperm-zona binding or migration of sperm from the uterus into the oviduct. Interactions with egg membrane could be mediated via binding between its disintegrin-like domain to one or more integrins receptors on the egg. This is a non catalytic metalloprotease-like protein. The chain is Disintegrin and metalloproteinase domain-containing protein 2 from Mus musculus (Mouse).